The chain runs to 293 residues: Protease HtpX homolog (293 aa).

A run of 2 helical transmembrane segments spans residues 4 to 24 (IFLFLITNLAVMVVLSATMRI) and 38 to 58 (LTGLLIFSAVIGFTGAIISLL). A Zn(2+)-binding site is contributed by histidine 146. The active site involves glutamate 147. Histidine 150 is a Zn(2+) binding site. Transmembrane regions (helical) follow at residues 161-181 (LIQGVVNTFVVFLARVVGYFV) and 198-218 (ATVIVCEIVFGILASIIVAWF). Glutamate 223 is a binding site for Zn(2+).

The protein belongs to the peptidase M48B family. The cofactor is Zn(2+).

It localises to the cell inner membrane. The sequence is that of Protease HtpX homolog from Bordetella parapertussis (strain 12822 / ATCC BAA-587 / NCTC 13253).